The chain runs to 396 residues: MGIHGLTKLLGDNAPGCIKETKFENLFGRKVAVDASMHIYQFMVVVGRQGDQLLTNEAGEITSHLQGMFFRTAKMLEAGIKPVYVFDGKPPQLKQDQLAQRTERRADANEALEKAKEAGDQEAIEKYSKRSVRVTREHNDECKRLLRLMGVPVVEAPTEAEAQCAEMAKSGLVYGLATEDMDALTFGAPRVIRHLMAPSSQNVPVQEFDREVALRELELTDDQFIDLCILMGCDYCGTIRGIGAVRALQMIKKHGSIEGMLKELDPAKYPVPEPFPHKESHEFFKNPEVTPSAEIPPLKWTAPDEEGLVQFLVNEKQFNEQRVRNAVGRIKANKTKANQGRLESFFTSLPKPATADKAKPKEDDKKRKAGAAAGGKDAKGGAAAKKGKFGVGGGKK.

The N-domain stretch occupies residues Met-1 to Arg-105. Asp-34 provides a ligand contact to Mg(2+). Arg-71 lines the DNA pocket. Mg(2+)-binding residues include Asp-87, Glu-159, Glu-161, Asp-180, and Asp-182. Residues Ala-123–His-254 are I-domain. Glu-159 contacts DNA. Positions 232 and 234 each coordinate DNA. A Mg(2+)-binding site is contributed by Asp-234. The interval Asn-338 to Phe-346 is interaction with PCNA. The disordered stretch occupies residues Arg-341–Lys-396. The span at Thr-354–Lys-366 shows a compositional bias: basic and acidic residues. Over residues Gly-370–Ala-384 the composition is skewed to low complexity.

Belongs to the XPG/RAD2 endonuclease family. FEN1 subfamily. In terms of assembly, interacts with PCNA. Three molecules of FEN1 bind to one PCNA trimer with each molecule binding to one PCNA monomer. PCNA stimulates the nuclease activity without altering cleavage specificity. The cofactor is Mg(2+). In terms of processing, phosphorylated. Phosphorylation upon DNA damage induces relocalization to the nuclear plasma.

The protein localises to the nucleus. It localises to the nucleolus. Its subcellular location is the nucleoplasm. The protein resides in the mitochondrion. Functionally, structure-specific nuclease with 5'-flap endonuclease and 5'-3' exonuclease activities involved in DNA replication and repair. During DNA replication, cleaves the 5'-overhanging flap structure that is generated by displacement synthesis when DNA polymerase encounters the 5'-end of a downstream Okazaki fragment. It enters the flap from the 5'-end and then tracks to cleave the flap base, leaving a nick for ligation. Also involved in the long patch base excision repair (LP-BER) pathway, by cleaving within the apurinic/apyrimidinic (AP) site-terminated flap. Acts as a genome stabilization factor that prevents flaps from equilibrating into structures that lead to duplications and deletions. Also possesses 5'-3' exonuclease activity on nicked or gapped double-stranded DNA, and exhibits RNase H activity. Also involved in replication and repair of rDNA and in repairing mitochondrial DNA. In Chlamydomonas reinhardtii (Chlamydomonas smithii), this protein is Flap endonuclease 1.